A 416-amino-acid polypeptide reads, in one-letter code: Phosphatidylinositol 5-phosphate 4-kinase type-2 beta (416 aa).

S2 is modified (N-acetylserine). T8 bears the Phosphothreonine mark. S19 carries the phosphoserine modification. Residues 38-415 form the PIPK domain; it reads ASEPILSVLM…RFNEFMSNIL (378 aa). The segment at 64-70 is required for interaction with PIP5K1A; sequence VMLMPDD. Residues K94 and K150 each carry the N6-acetyllysine modification. Residues 202-204 and K214 contribute to the ATP site; that span reads RNV. GTP is bound by residues 203-204 and K214; that span reads NV. A Phosphothreonine modification is found at T322. S326 is modified (phosphoserine). D369 lines the GTP pocket.

Homodimer. Binds TNFRSF1A. Interacts with PIP4K2A; the interaction suppresses ubiquitination by the SPOP/CUL3 complex. Probably interacts with PIP5K1A; the interaction inhibits PIP5K1A kinase activity. Ubiquitinated by the SPOP/CUL3 complex. Ubiquitination is stimulated by PtdIns5P levels. In terms of processing, phosphorylated on serine residues.

The protein resides in the endoplasmic reticulum membrane. The protein localises to the cell membrane. It localises to the nucleus. It is found in the cytoplasm. The enzyme catalyses a 1,2-diacyl-sn-glycero-3-phospho-(1D-myo-inositol-5-phosphate) + ATP = a 1,2-diacyl-sn-glycero-3-phospho-(1D-myo-inositol-4,5-bisphosphate) + ADP + H(+). It carries out the reaction 1,2-dihexadecanoyl-sn-glycero-3-phospho-(1D-myo-inositol-5-phosphate) + ATP = 1,2-dihexadecanoyl-sn-glycero-3-phospho-(1D-myo-inositol-4,5-bisphosphate) + ADP + H(+). It catalyses the reaction 1,2-dihexadecanoyl-sn-glycero-3-phospho-(1D-myo-inositol-5-phosphate) + GTP = 1,2-dihexadecanoyl-sn-glycero-3-phospho-(1D-myo-inositol-4,5-bisphosphate) + GDP + H(+). Functionally, participates in the biosynthesis of phosphatidylinositol 4,5-bisphosphate. Preferentially utilizes GTP, rather than ATP, for PI(5)P phosphorylation and its activity reflects changes in direct proportion to the physiological GTP concentration. Its GTP-sensing activity is critical for metabolic adaptation. PIP4Ks negatively regulate insulin signaling through a catalytic-independent mechanism. They interact with PIP5Ks and suppress PIP5K-mediated PtdIns(4,5)P2 synthesis and insulin-dependent conversion to PtdIns(3,4,5)P3. This Rattus norvegicus (Rat) protein is Phosphatidylinositol 5-phosphate 4-kinase type-2 beta.